The chain runs to 203 residues: MNRVILLLSVMCVGVSSQPITENQRLFSIAVGRVQYLHLVAKKLFSEFENSQLEDQHPLNKIFLQDFCHSDYFLSPIDKHETQRSSVLKLLSISYRLIECWEFSSRFLVAGFAERAQVTSKLSELKTGLMKLIEANQDGAGGFSESSVIQLTPYGNYYQSVGVDESFRLNYELFACFKKDMHKVETYLTVAKCRLSPEANCTL.

Positions 1–17 (MNRVILLLSVMCVGVSS) are cleaved as a signal peptide. At glutamine 18 the chain carries Pyrrolidone carboxylic acid. Cystine bridges form between cysteine 68–cysteine 176 and cysteine 193–cysteine 201.

The protein belongs to the somatotropin/prolactin family.

It localises to the secreted. Its function is as follows. Growth hormone plays an important role in growth control and is involved in the regulation of several anabolic processes. Implicated as an osmoregulatory substance important for seawater adaptation. The sequence is that of Somatotropin (gh) from Verasper variegatus (Spotted flounder).